A 469-amino-acid polypeptide reads, in one-letter code: Chromosomal replication initiator protein DnaA (469 aa).

Residues 1-83 (MSEWDYKIFW…KKISIDFIIK (83 aa)) are domain I, interacts with DnaA modulators. The domain II stretch occupies residues 83–128 (KPNTSEDLSKAENEGGNDKKEDAAKPSSAESKKKSVKTEGGRGQHP). The tract at residues 89 to 131 (DLSKAENEGGNDKKEDAAKPSSAESKKKSVKTEGGRGQHPDLR) is disordered. A domain III, AAA+ region region spans residues 129 to 344 (DLRPEYNFED…AALTKLIAYT (216 aa)). Positions 173, 175, 176, and 177 each coordinate ATP. The segment at 345 to 469 (ELTKKTMDEA…RNTIKENTNK (125 aa)) is domain IV, binds dsDNA.

This sequence belongs to the DnaA family. Oligomerizes as a right-handed, spiral filament on DNA at oriC.

The protein localises to the cytoplasm. Its function is as follows. Plays an essential role in the initiation and regulation of chromosomal replication. ATP-DnaA binds to the origin of replication (oriC) to initiate formation of the DNA replication initiation complex once per cell cycle. Binds the DnaA box (a 9 base pair repeat at the origin) and separates the double-stranded (ds)DNA. Forms a right-handed helical filament on oriC DNA; dsDNA binds to the exterior of the filament while single-stranded (ss)DNA is stabiized in the filament's interior. The ATP-DnaA-oriC complex binds and stabilizes one strand of the AT-rich DNA unwinding element (DUE), permitting loading of DNA polymerase. After initiation quickly degrades to an ADP-DnaA complex that is not apt for DNA replication. Binds acidic phospholipids. The chain is Chromosomal replication initiator protein DnaA from Treponema denticola (strain ATCC 35405 / DSM 14222 / CIP 103919 / JCM 8153 / KCTC 15104).